A 268-amino-acid polypeptide reads, in one-letter code: 4-hydroxy-tetrahydrodipicolinate reductase (268 aa).

An NAD(+)-binding site is contributed by 8 to 13 (GAAGRM). NADP(+) is bound at residue R36. NAD(+)-binding positions include 99–101 (GTT) and 123–126 (AANF). H156 (proton donor/acceptor) is an active-site residue. Residue H157 coordinates (S)-2,3,4,5-tetrahydrodipicolinate. Catalysis depends on K160, which acts as the Proton donor. 166-167 (GT) provides a ligand contact to (S)-2,3,4,5-tetrahydrodipicolinate.

It belongs to the DapB family.

It is found in the cytoplasm. The enzyme catalyses (S)-2,3,4,5-tetrahydrodipicolinate + NAD(+) + H2O = (2S,4S)-4-hydroxy-2,3,4,5-tetrahydrodipicolinate + NADH + H(+). It catalyses the reaction (S)-2,3,4,5-tetrahydrodipicolinate + NADP(+) + H2O = (2S,4S)-4-hydroxy-2,3,4,5-tetrahydrodipicolinate + NADPH + H(+). It participates in amino-acid biosynthesis; L-lysine biosynthesis via DAP pathway; (S)-tetrahydrodipicolinate from L-aspartate: step 4/4. Catalyzes the conversion of 4-hydroxy-tetrahydrodipicolinate (HTPA) to tetrahydrodipicolinate. This is 4-hydroxy-tetrahydrodipicolinate reductase from Pseudomonas fluorescens (strain SBW25).